We begin with the raw amino-acid sequence, 64 residues long: Potassium channel toxin kappa-KTx 3.4 (64 aa).

An N-terminal signal peptide occupies residues 1–26 (MKSTLMTASLLILVLLSIIDYASVYA). Positions 27 to 36 (EFIDSEISLE) are excised as a propeptide. 2 disulfide bridges follow: cysteine 43–cysteine 61 and cysteine 47–cysteine 57.

Belongs to the short scorpion toxin superfamily. Potassium channel inhibitor kappa-KTx family. Kappa-KTx 3 subfamily. As to expression, expressed by the venom gland.

The protein localises to the secreted. Functionally, potassium channel inhibitor (Kv). The sequence is that of Potassium channel toxin kappa-KTx 3.4 from Heterometrus petersii (Asian forest scorpion).